Consider the following 293-residue polypeptide: Glutamyl-Q tRNA(Asp) synthetase (293 aa).

Residues 8–12 and Glu-44 each bind L-glutamate; that span reads RFAPS. The short motif at 11-21 is the 'HIGH' region element; that stretch reads PSPSGPLHAGS. The Zn(2+) site is built by Cys-98, Cys-100, Tyr-120, and Cys-124. 2 residues coordinate L-glutamate: Tyr-183 and Arg-201. A 'KMSKS' region motif is present at residues 239 to 243; sequence KLSKQ. An ATP-binding site is contributed by Lys-242.

The protein belongs to the class-I aminoacyl-tRNA synthetase family. GluQ subfamily. The cofactor is Zn(2+).

Its function is as follows. Catalyzes the tRNA-independent activation of glutamate in presence of ATP and the subsequent transfer of glutamate onto a tRNA(Asp). Glutamate is transferred on the 2-amino-5-(4,5-dihydroxy-2-cyclopenten-1-yl) moiety of the queuosine in the wobble position of the QUC anticodon. The sequence is that of Glutamyl-Q tRNA(Asp) synthetase from Janthinobacterium sp. (strain Marseille) (Minibacterium massiliensis).